The sequence spans 398 residues: Phosphoglycerate kinase (398 aa).

Substrate contacts are provided by residues 23–25, arginine 38, 61–64, arginine 119, and arginine 152; these read DLN and HFGR. Residues lysine 202, glutamate 324, and 354–357 contribute to the ATP site; that span reads GGDT.

It belongs to the phosphoglycerate kinase family. Monomer.

The protein resides in the cytoplasm. The enzyme catalyses (2R)-3-phosphoglycerate + ATP = (2R)-3-phospho-glyceroyl phosphate + ADP. It participates in carbohydrate degradation; glycolysis; pyruvate from D-glyceraldehyde 3-phosphate: step 2/5. The sequence is that of Phosphoglycerate kinase from Rhodopseudomonas palustris (strain ATCC BAA-98 / CGA009).